A 444-amino-acid polypeptide reads, in one-letter code: Tubulin beta-8 chain (444 aa).

Residues 1–4 (MREI) carry the MREI motif motif. Gln-11, Glu-69, Ser-138, Gly-142, Thr-143, and Gly-144 together coordinate GTP. Residue Glu-69 coordinates Mg(2+). Ser-172 bears the Phosphoserine; by CDK1 mark. Residues Asn-204 and Asn-226 each coordinate GTP. Residues 423–444 (QQYQDATAEEEEDEEYAEEEVA) form a disordered region. Positions 429–444 (TAEEEEDEEYAEEEVA) are enriched in acidic residues. 5-glutamyl polyglutamate is present on Glu-436.

The protein belongs to the tubulin family. As to quaternary structure, dimer of alpha and beta chains. A typical microtubule is a hollow water-filled tube with an outer diameter of 25 nm and an inner diameter of 15 nM. Alpha-beta heterodimers associate head-to-tail to form protofilaments running lengthwise along the microtubule wall with the beta-tubulin subunit facing the microtubule plus end conferring a structural polarity. Microtubules usually have 13 protofilaments but different protofilament numbers can be found in some organisms and specialized cells. The cofactor is Mg(2+). In terms of processing, some glutamate residues at the C-terminus are polyglutamylated, resulting in polyglutamate chains on the gamma-carboxyl group. Polyglutamylation plays a key role in microtubule severing by spastin (SPAST). SPAST preferentially recognizes and acts on microtubules decorated with short polyglutamate tails: severing activity by SPAST increases as the number of glutamates per tubulin rises from one to eight, but decreases beyond this glutamylation threshold. Glutamylation is also involved in cilia motility. Post-translationally, some glutamate residues at the C-terminus are monoglycylated but not polyglycylated due to the absence of functional TTLL10 in human. Monoglycylation is mainly limited to tubulin incorporated into cilia and flagella axonemes, which is required for their stability and maintenance. Flagella glycylation controls sperm motility. Both polyglutamylation and monoglycylation can coexist on the same protein on adjacent residues, and lowering glycylation levels increases polyglutamylation, and reciprocally. Phosphorylated on Ser-172 by CDK1 during the cell cycle, from metaphase to telophase, but not in interphase. This phosphorylation inhibits tubulin incorporation into microtubules. In terms of tissue distribution, expressed at a high level in oocytes, at different stages of development.

The protein localises to the cytoplasm. It is found in the cytoskeleton. The protein resides in the spindle. Its function is as follows. Tubulin is the major constituent of microtubules, a cylinder consisting of laterally associated linear protofilaments composed of alpha- and beta-tubulin heterodimers. Microtubules grow by the addition of GTP-tubulin dimers to the microtubule end, where a stabilizing cap forms. Below the cap, tubulin dimers are in GDP-bound state, owing to GTPase activity of alpha-tubulin. TUBB8 has a key role in meiotic spindle assembly and oocyte maturation. The polypeptide is Tubulin beta-8 chain (Homo sapiens (Human)).